The sequence spans 208 residues: Ribosomal RNA large subunit methyltransferase E (208 aa).

Residues Gly-62, Trp-64, Asp-82, Asp-98, and Asp-123 each coordinate S-adenosyl-L-methionine. Lys-163 acts as the Proton acceptor in catalysis.

The protein belongs to the class I-like SAM-binding methyltransferase superfamily. RNA methyltransferase RlmE family.

It is found in the cytoplasm. The enzyme catalyses uridine(2552) in 23S rRNA + S-adenosyl-L-methionine = 2'-O-methyluridine(2552) in 23S rRNA + S-adenosyl-L-homocysteine + H(+). Its function is as follows. Specifically methylates the uridine in position 2552 of 23S rRNA at the 2'-O position of the ribose in the fully assembled 50S ribosomal subunit. This Mannheimia succiniciproducens (strain KCTC 0769BP / MBEL55E) protein is Ribosomal RNA large subunit methyltransferase E.